We begin with the raw amino-acid sequence, 205 residues long: Ypt/Rab-type GTPase avaA (205 aa).

Residues 17–23, 33–40, Gly66, 125–128, and 157–159 each bind GTP; these read SGVGKTS, FSGSYKAT, NKID, and SAK. The Effector region signature appears at 37–45; sequence YKATIGADF. Residues Cys203 and Cys205 are each lipidated (S-geranylgeranyl cysteine). At Cys205 the chain carries Cysteine methyl ester.

It belongs to the small GTPase superfamily. Rab family.

Rab activation is generally mediated by a guanine exchange factor (GEF), while inactivation through hydrolysis of bound GTP is catalyzed by a GTPase activating protein (GAP). Functionally, ypt/Rab-type GTPases are key regulators of membrane trafficking and intracellular vesicular transport. They act as molecular switches that convert between GTP-bound and GDP-bound states, and regulate virtually all steps of membrane traffic from the formation of the transport vesicle at the donor membrane to its fusion at the target membrane. In the GDP-bound state, Ypt proteins are predominantly cytosolic, solubilized through the interaction with a GDP dissociation inhibitor (GDI). In the GTP-bound state, the proteins are membrane bound and interact with specific effector proteins that select cargo, promote vesicle movement, or verify the correct site of fusion. AvaA functions in vacuolar biogenesis. The polypeptide is Ypt/Rab-type GTPase avaA (Emericella nidulans (strain FGSC A4 / ATCC 38163 / CBS 112.46 / NRRL 194 / M139) (Aspergillus nidulans)).